Here is a 153-residue protein sequence, read N- to C-terminus: MDQNEIETLQYYLKEYGQQAEVFAGQLELMENGRMEALAAIEALEALATSEDGTVLLQIGGGASLRAKVLEPEKVLLNIGSEVIVEKTSVDAIEYLKDRITELEASQKKVSEALEKLRAQTNEIAKRLEQGYRQAPGGSPVPHRHDHEDHDEE.

Positions 126–153 are disordered; sequence KRLEQGYRQAPGGSPVPHRHDHEDHDEE. The segment covering 143-153 has biased composition (basic and acidic residues); sequence HRHDHEDHDEE.

Belongs to the prefoldin alpha subunit family. Heterohexamer of two alpha and four beta subunits.

Its subcellular location is the cytoplasm. Its function is as follows. Molecular chaperone capable of stabilizing a range of proteins. Seems to fulfill an ATP-independent, HSP70-like function in archaeal de novo protein folding. The protein is Prefoldin subunit alpha of Methanoregula boonei (strain DSM 21154 / JCM 14090 / 6A8).